Here is a 227-residue protein sequence, read N- to C-terminus: 2-C-methyl-D-erythritol 4-phosphate cytidylyltransferase (227 aa).

Belongs to the IspD/TarI cytidylyltransferase family. IspD subfamily.

It catalyses the reaction 2-C-methyl-D-erythritol 4-phosphate + CTP + H(+) = 4-CDP-2-C-methyl-D-erythritol + diphosphate. It functions in the pathway isoprenoid biosynthesis; isopentenyl diphosphate biosynthesis via DXP pathway; isopentenyl diphosphate from 1-deoxy-D-xylulose 5-phosphate: step 2/6. Functionally, catalyzes the formation of 4-diphosphocytidyl-2-C-methyl-D-erythritol from CTP and 2-C-methyl-D-erythritol 4-phosphate (MEP). The polypeptide is 2-C-methyl-D-erythritol 4-phosphate cytidylyltransferase (Deinococcus geothermalis (strain DSM 11300 / CIP 105573 / AG-3a)).